The primary structure comprises 125 residues: Glycine cleavage system H protein (125 aa).

The Lipoyl-binding domain maps to 19–101 (VGTVGISDYA…EGAAWFFKLT (83 aa)). Lysine 60 carries the post-translational modification N6-lipoyllysine.

It belongs to the GcvH family. As to quaternary structure, the glycine cleavage system is composed of four proteins: P, T, L and H. The cofactor is (R)-lipoate.

Functionally, the glycine cleavage system catalyzes the degradation of glycine. The H protein shuttles the methylamine group of glycine from the P protein to the T protein. This Paramagnetospirillum magneticum (strain ATCC 700264 / AMB-1) (Magnetospirillum magneticum) protein is Glycine cleavage system H protein.